Here is a 96-residue protein sequence, read N- to C-terminus: Co-chaperonin GroES (96 aa).

Belongs to the GroES chaperonin family. In terms of assembly, heptamer of 7 subunits arranged in a ring. Interacts with the chaperonin GroEL.

It localises to the cytoplasm. In terms of biological role, together with the chaperonin GroEL, plays an essential role in assisting protein folding. The GroEL-GroES system forms a nano-cage that allows encapsulation of the non-native substrate proteins and provides a physical environment optimized to promote and accelerate protein folding. GroES binds to the apical surface of the GroEL ring, thereby capping the opening of the GroEL channel. This chain is Co-chaperonin GroES, found in Shewanella denitrificans (strain OS217 / ATCC BAA-1090 / DSM 15013).